We begin with the raw amino-acid sequence, 289 residues long: Protease HtpX (289 aa).

Helical transmembrane passes span 6-26 and 38-58; these read ILFL…LNII and TGIL…SLFM. Position 144 (histidine 144) interacts with Zn(2+). Glutamate 145 is a catalytic residue. Residue histidine 148 participates in Zn(2+) binding. 2 consecutive transmembrane segments (helical) span residues 152 to 172 and 194 to 214; these read GDMV…IFLS and LVFW…ATMI. Glutamate 223 contributes to the Zn(2+) binding site.

The protein belongs to the peptidase M48B family. Zn(2+) is required as a cofactor.

The protein resides in the cell inner membrane. The polypeptide is Protease HtpX (Haemophilus ducreyi (strain 35000HP / ATCC 700724)).